Reading from the N-terminus, the 438-residue chain is Protein translocase subunit SecY (438 aa).

Residues 1 to 43 (MKIKPILELIPEVKRPLKGVSFKEKIQWTGLVLILYFILGTID) form a helical membrane-spanning segment. At 44–54 (IYMGGAEMPAM) the chain is on the extracellular side. Positions 55-62 (FAFWQTVT) form an intramembrane region, helical. The discontinuously helical transmembrane segment at 55–83 (FAFWQTVTASKMGTLITLGIGPIVTAGII) threads the bilayer. Residues 63–74 (ASKMGTLITLGI) lie within the membrane without spanning it. The segment at residues 75 to 83 (GPIVTAGII) is an intramembrane region (helical). The Cytoplasmic portion of the chain corresponds to 84 to 104 (MQLLVGSELISLDLSKPMNRA). A helical membrane pass occupies residues 105–129 (LFQGLQKLFGIFLCFLEAVMFVGAG). The Extracellular portion of the chain corresponds to 130-136 (AFGVVNS). Residues 137–161 (TLALILVLQLALGAILVIYLDEIVS) traverse the membrane as a helical segment. The Cytoplasmic portion of the chain corresponds to 162 to 167 (RYGIGS). A helical membrane pass occupies residues 168–186 (GIGLFIAAGVAQTIFVGAF). Topologically, residues 187–209 (GAEGYLWKFFSAMSVGSLGIAFE) are extracellular. Residues 210–231 (YILPILSTLFVFLVVVYVESIR) form a helical membrane-spanning segment. The Cytoplasmic segment spans residues 232–256 (VEIPLAHGRVKGAVGKYPIKFIYVS). The helical transmembrane segment at 257 to 278 (NLPVILAAALFANIQLWGMFLD) threads the bilayer. At 279–315 (RMGYPILGQYSNGTAVSGIAYYFSTPYGISNIISDPL) the chain is on the extracellular side. The chain crosses the membrane as a helical span at residues 316 to 335 (HAIFYTLMMVIFCILFGLFW). The Cytoplasmic segment spans residues 336–378 (VETSGLDAKSMAKKLGNLDMAIKGFRKSQKSIEQRLKRYIKPI). The chain crosses the membrane as a helical span at residues 379–397 (TVMGSAFVGFLAAAADFTG). Residues 398 to 400 (ALG) lie on the Extracellular side of the membrane. Residues 401–415 (GGTGVLLTVSIVYRL) traverse the membrane as a helical segment. Residues 416–438 (YEQLVQEQLSELHPAVAKFVGKR) are Cytoplasmic-facing.

The protein belongs to the SecY/SEC61-alpha family. Component of the Sec protein translocase complex. Heterotrimer consisting of alpha (SecY), beta (SecG) and gamma (SecE) subunits. The heterotrimers can form oligomers, although 1 heterotrimer is thought to be able to translocate proteins. Interacts with the ribosome. May interact with SecDF, and other proteins may be involved.

The protein localises to the cell membrane. Its function is as follows. The central subunit of the protein translocation channel SecYEG. Consists of two halves formed by TMs 1-5 and 6-10. These two domains form a lateral gate at the front which open onto the bilayer between TMs 2 and 7, and are clamped together by SecE at the back. The channel is closed by both a pore ring composed of hydrophobic SecY resides and a short helix (helix 2A) on the extracellular side of the membrane which forms a plug. The plug probably moves laterally to allow the channel to open. The ring and the pore may move independently. This Methanococcus vannielii protein is Protein translocase subunit SecY.